We begin with the raw amino-acid sequence, 131 residues long: Small ribosomal subunit protein bS6 (131 aa).

The tract at residues 97–131 (TEASPMAKARDERDSRRGPAGERSYDEAHAEEIAE) is disordered. Residues 104 to 131 (KARDERDSRRGPAGERSYDEAHAEEIAE) are compositionally biased toward basic and acidic residues.

It belongs to the bacterial ribosomal protein bS6 family.

Binds together with bS18 to 16S ribosomal RNA. This is Small ribosomal subunit protein bS6 from Shewanella baltica (strain OS223).